The following is a 668-amino-acid chain: Bestrophin-3 (668 aa).

The Cytoplasmic segment spans residues 1–31 (MTVTYSSKVANATFFGFHRLLLKWRGSIYKL). A Ca(2+)-binding site is contributed by Ala10. Residues 32 to 51 (LYREFIVFAVLYTAISLVYR) traverse the membrane as a helical segment. Topologically, residues 52-60 (LLLTGVQKR) are extracellular. The helical transmembrane segment at 61–82 (YFEKLSIYCDRYAEQIPVTFVL) threads the bilayer. Residues 83–237 (GFYVTLVVNR…DWVGIPLVYT (155 aa)) lie on the Cytoplasmic side of the membrane. Residues 238–255 (QVVTLAVYTFFFACLIGR) form a helical membrane-spanning segment. The Extracellular segment spans residues 256–274 (QFLDPTKGYAGHDLDLYIP). A helical transmembrane segment spans residues 275–288 (IFTLLQFFFYAGWL). The Cytoplasmic portion of the chain corresponds to 289-668 (KVAEQLINPF…LNKETEESPK (380 aa)). Positions 293, 296, 301, and 304 each coordinate Ca(2+). Disordered stretches follow at residues 400–454 (SAHE…KKSC), 473–493 (RETSQTSTLQSLTPQSSVRTS), and 532–570 (TGVQPSKTEQQQGPMGSILSPSEKETPPGGPSPQTVSAS). The segment covering 425-436 (PRDDLSPARDLL) has biased composition (basic and acidic residues). The segment covering 475 to 489 (TSQTSTLQSLTPQSS) has biased composition (low complexity). The span at 532 to 545 (TGVQPSKTEQQQGP) shows a compositional bias: polar residues.

The protein belongs to the anion channel-forming bestrophin (TC 1.A.46) family. Calcium-sensitive chloride channel subfamily. In terms of tissue distribution, present in skeletal muscle and weakly in brain, spinal cord, bone marrow and retina.

It is found in the cell membrane. It carries out the reaction chloride(in) = chloride(out). Its function is as follows. Ligand-gated anion channel that allows the movement of chloride monoatomic anions across cell membranes when activated by calcium (Ca2+). This Homo sapiens (Human) protein is Bestrophin-3.